A 312-amino-acid polypeptide reads, in one-letter code: Ribosomal RNA small subunit methyltransferase H (312 aa).

S-adenosyl-L-methionine is bound by residues 33 to 35 (AGH), Asp-53, Phe-79, Asp-100, and Gln-107.

It belongs to the methyltransferase superfamily. RsmH family.

The protein resides in the cytoplasm. The enzyme catalyses cytidine(1402) in 16S rRNA + S-adenosyl-L-methionine = N(4)-methylcytidine(1402) in 16S rRNA + S-adenosyl-L-homocysteine + H(+). Its function is as follows. Specifically methylates the N4 position of cytidine in position 1402 (C1402) of 16S rRNA. This chain is Ribosomal RNA small subunit methyltransferase H, found in Clostridium acetobutylicum (strain ATCC 824 / DSM 792 / JCM 1419 / IAM 19013 / LMG 5710 / NBRC 13948 / NRRL B-527 / VKM B-1787 / 2291 / W).